The chain runs to 314 residues: Probable dimethyladenosine transferase (314 aa).

His-36, Leu-38, Gly-63, Glu-84, Asp-112, and Asn-127 together coordinate S-adenosyl-L-methionine.

This sequence belongs to the class I-like SAM-binding methyltransferase superfamily. rRNA adenine N(6)-methyltransferase family. In terms of assembly, part of the small subunit (SSU) processome, composed of more than 70 proteins and the RNA chaperone small nucleolar RNA (snoRNA) U3.

The protein localises to the nucleus. Its subcellular location is the nucleoplasm. The protein resides in the nucleolus. It catalyses the reaction adenosine(1779)/adenosine(1780) in 18S rRNA + 4 S-adenosyl-L-methionine = N(6)-dimethyladenosine(1779)/N(6)-dimethyladenosine(1780) in 18S rRNA + 4 S-adenosyl-L-homocysteine + 4 H(+). Its function is as follows. Specifically dimethylates two adjacent adenosines in the loop of a conserved hairpin near the 3'-end of 18S rRNA in the 40S particle. Involved in the pre-rRNA processing steps leading to small-subunit rRNA production independently of its RNA-modifying catalytic activity. Part of the small subunit (SSU) processome, first precursor of the small eukaryotic ribosomal subunit. During the assembly of the SSU processome in the nucleolus, many ribosome biogenesis factors, an RNA chaperone and ribosomal proteins associate with the nascent pre-rRNA and work in concert to generate RNA folding, modifications, rearrangements and cleavage as well as targeted degradation of pre-ribosomal RNA by the RNA exosome. In Dictyostelium discoideum (Social amoeba), this protein is Probable dimethyladenosine transferase (dimt1).